The sequence spans 434 residues: MDDQSRMLQTLAGVNLAGHSVQGGMALPPPPHGHEGADGDGRKQDIGDILHQIMTITDQSLDEAQAKKHALNCHRMKPALFSVLCEIKEKTGLSIRGAQEEDPPDPQLMRLDNMLLAEGVSGPEKGGGSAAAAAAAAASGGSSDNSIEHSDYRAKLTQIRQIYHTELEKYEQACNEFTTHVMNLLREQSRTRPISPKEIERMVGIIHRKFSSIQMQLKQSTCEAVMILRSRFLDARRKRRNFSKQATEILNEYFYSHLSNPYPSEEAKEELAKKCSITVSQVSNWFGNKRIRYKKNIGKFQEEANLYAAKTAVTAAHAVAAAVQNNQTNSPTTPNSGSSGSFNLPNSGDMFMNMQSLNGDSYQGSQVGANVQSQVDTLRHVINQTGGYSDGLGANSLYSPHNLNANGGWQDATTPSSVTSPTEGPGSVHSDTSN.

Positions 20–41 (SVQGGMALPPPPHGHEGADGDG) are disordered. Over residues 32 to 41 (HGHEGADGDG) the composition is skewed to basic and acidic residues. The PBC domain maps to 41 to 234 (GRKQDIGDIL…VMILRSRFLD (194 aa)). Positions 48-127 (DILHQIMTIT…EGVSGPEKGG (80 aa)) are PBC-A. A PBC-B region spans residues 130 to 234 (AAAAAAAAAS…VMILRSRFLD (105 aa)). A DNA-binding region (homeobox; TALE-type) is located at residues 235–297 (ARRKRRNFSK…NKRIRYKKNI (63 aa)). Residues 326 to 341 (NQTNSPTTPNSGSSGS) show a composition bias toward low complexity. Disordered regions lie at residues 326 to 349 (NQTN…NSGD) and 405 to 434 (ANGG…DTSN). A compositionally biased stretch (polar residues) spans 405 to 422 (ANGGWQDATTPSSVTSPT).

Belongs to the TALE/PBX homeobox family. In terms of assembly, interacts with PBXIP1.

Its subcellular location is the nucleus. In terms of biological role, transcriptional activator that binds the sequence 5'-ATCAATCAA-3'. The sequence is that of Pre-B-cell leukemia transcription factor 3 (Pbx3) from Mus musculus (Mouse).